The primary structure comprises 346 residues: Protein RecA (346 aa).

64-71 (GPESSGKT) contacts ATP.

This sequence belongs to the RecA family.

It is found in the cytoplasm. Can catalyze the hydrolysis of ATP in the presence of single-stranded DNA, the ATP-dependent uptake of single-stranded DNA by duplex DNA, and the ATP-dependent hybridization of homologous single-stranded DNAs. It interacts with LexA causing its activation and leading to its autocatalytic cleavage. In Bacillus pumilus (strain SAFR-032), this protein is Protein RecA.